The primary structure comprises 221 residues: Cytidylate kinase (221 aa).

11-19 (GPCGAGKST) contributes to the ATP binding site.

The protein belongs to the cytidylate kinase family. Type 1 subfamily.

Its subcellular location is the cytoplasm. The catalysed reaction is CMP + ATP = CDP + ADP. The enzyme catalyses dCMP + ATP = dCDP + ADP. This is Cytidylate kinase from Mycoplasmopsis agalactiae (strain NCTC 10123 / CIP 59.7 / PG2) (Mycoplasma agalactiae).